A 258-amino-acid chain; its full sequence is Imidazole glycerol phosphate synthase subunit HisF (258 aa).

Residues Asp11 and Asp130 contribute to the active site.

The protein belongs to the HisA/HisF family. Heterodimer of HisH and HisF.

The protein resides in the cytoplasm. It carries out the reaction 5-[(5-phospho-1-deoxy-D-ribulos-1-ylimino)methylamino]-1-(5-phospho-beta-D-ribosyl)imidazole-4-carboxamide + L-glutamine = D-erythro-1-(imidazol-4-yl)glycerol 3-phosphate + 5-amino-1-(5-phospho-beta-D-ribosyl)imidazole-4-carboxamide + L-glutamate + H(+). The protein operates within amino-acid biosynthesis; L-histidine biosynthesis; L-histidine from 5-phospho-alpha-D-ribose 1-diphosphate: step 5/9. Its function is as follows. IGPS catalyzes the conversion of PRFAR and glutamine to IGP, AICAR and glutamate. The HisF subunit catalyzes the cyclization activity that produces IGP and AICAR from PRFAR using the ammonia provided by the HisH subunit. This Stenotrophomonas maltophilia (strain R551-3) protein is Imidazole glycerol phosphate synthase subunit HisF.